The primary structure comprises 988 residues: RecQ-like DNA helicase blm-1 (988 aa).

Residues 46-119 (CEEREEEYID…QFPSRPQKRL (74 aa)) form a disordered region. 2 tandem repeats follow at residues 121-129 (DPPIVDLDE) and 130-138 (EPPIVDLDD). Positions 121 to 138 (DPPIVDLDEEPPIVDLDD) are 2 X 9 AA tandem repeats of [DE]-P-P-I-V-D-L-D-[ED]. The tract at residues 148–185 (TSEEVVSGDIAPEEEEEEGHDSFDDFESVPAQPPSKNT) is disordered. Residues 158-174 (APEEEEEEGHDSFDDFE) show a composition bias toward acidic residues. ATP contacts are provided by residues 248–252 (FRHRQ) and 272–276 (GAGKS). Positions 256 to 433 (ILSTLMGHDT…RDHLKMQNSK (178 aa)) constitute a Helicase ATP-binding domain. The short motif at 375–378 (DEAH) is the DEAH box element. Positions 458–603 (NVVEKMKQLY…VRSMHLNNVL (146 aa)) constitute a Helicase C-terminal domain. The tract at residues 478-480 (SRK) is 3' overhang DNA-binding. Arginine 562 lines the ATP pocket. The interval 580–583 (RLRR) is 3' overhang DNA-binding. Residues cysteine 615, cysteine 633, cysteine 640, and cysteine 643 each coordinate Zn(2+). 3' overhang DNA-binding stretches follow at residues 676–678 (TLK), 687–691 (ALIKK), and 736–742 (YSVPNQA). The 82-residue stretch at 807-888 (GDVFTRCLQD…ATYWKQVDER (82 aa)) folds into the HRDC domain. The tract at residues 930 to 988 (GGGGCRGRGKKRAFSGFSSGRATKKPRATAPSARGKTSGRGGAKPATSLKRNMYPATSM) is disordered. Positions 939–955 (KKRAFSGFSSGRATKKP) match the Nuclear localization signal motif.

It belongs to the helicase family. RecQ subfamily. As to quaternary structure, monomer. Homodimer (via N-terminus). Homotetramer (via N-terminus); dimer of dimers. Homohexamer (via N-terminus). Self-association negatively regulates DNA unwinding amplitude and rate. Oligomer forms dissociate into monomer in presence of ATP. Component of the BTR double Holliday Junction dissolution complex composed of at least him-6, top-3, rmh-1 and rmif-2, which is involved in double strand break repair in the germline. May interact with rmh-1; the interaction is required for mutual stability and localization at nuclear foci. Forms a complex composed of cdc-48.1, him-6 and crp-1; within the complex, interacts with cdc-48.1. Requires Zn(2+) as cofactor.

The protein resides in the nucleus. Its subcellular location is the chromosome. The enzyme catalyses Couples ATP hydrolysis with the unwinding of duplex DNA by translocating in the 3'-5' direction.. It carries out the reaction ATP + H2O = ADP + phosphate + H(+). Functionally, component of the BTR double Holliday Junction dissolution complex, which is involved in homologous recombination during meiotic double strand break in the germline. Stabilizes and positively regulates the localization of the BTR double Holliday Junction dissolution complex component rmh-1 at nuclear foci during meiotic recombination. Participates in DNA replication and repair. Exhibits a magnesium-dependent ATP-dependent DNA-helicase activity that unwinds single- and double-stranded DNA in a 3'-5' direction. Negatively regulates sister chromatid exchange (SCE). In terms of biological role, ATP-dependent DNA helicase that unwinds single- and double-stranded DNA in a 3'-5' direction. Participates in DNA replication and repair. Negatively regulates sister chromatid exchange (SCE). Stimulates DNA 4-way junction branch migration and DNA Holliday junction dissolution. Binds single-stranded DNA (ssDNA), forked duplex DNA and DNA Holliday junction. In Caenorhabditis elegans, this protein is RecQ-like DNA helicase blm-1.